The primary structure comprises 262 residues: 14-3-3-like protein GF14-E (262 aa).

Belongs to the 14-3-3 family. Ubiquitous.

Its subcellular location is the cytoplasm. The protein resides in the nucleus. Its function is as follows. Is associated with a DNA binding complex that binds to the G box, a well-characterized cis-acting DNA regulatory element found in plant genes. This is 14-3-3-like protein GF14-E (GF14E) from Oryza sativa subsp. japonica (Rice).